Consider the following 585-residue polypeptide: Cyclic nucleotide-binding domain-containing protein 2 (585 aa).

116–239 contributes to the a nucleoside 3',5'-cyclic phosphate binding site; it reads SYRNYAEPLQ…DAQYRFEFFR (124 aa).

It localises to the cytoplasm. The protein resides in the cytosol. Functionally, essential for male fertility. Plays an important role in spermatogenesis and regulates sperm motility by controlling the development of the flagellar bending of sperm. The protein is Cyclic nucleotide-binding domain-containing protein 2 (CNBD2) of Macaca fascicularis (Crab-eating macaque).